A 326-amino-acid polypeptide reads, in one-letter code: MQSIIRQTEAALFAGAVLDRETAGKLARIEGSDIYTLMDVARRVRDHFGAGKVDLCSIVNAKSGACSEDCRFCAQSAHHQACVKTYDLLDPDAIVGRARVMEAEGAHRFSLVTSGRGMSDAELEPVLAIYERLRRETKLSLCASLGILNEAQLRRLAEAGVTMYHHNLEASRRFFPQICTTHSYDERIATIRAAQAAGMVVCSGGIFSMGETIDDRIDMAFELRELGIRSVPINILNPIAGTPLEGQPLIPPLEILKSIALYRLILPSARIRMAGGREGALRDLQSLPFIAGADAALVGSYLTTSGRTVAEDIQMLRDLGLNVNNL.

The Radical SAM core domain maps to 48–277; that stretch reads FGAGKVDLCS…SARIRMAGGR (230 aa). [4Fe-4S] cluster-binding residues include Cys66, Cys70, and Cys73. The [2Fe-2S] cluster site is built by Ser110, Cys142, Cys202, and Arg272.

This sequence belongs to the radical SAM superfamily. Biotin synthase family. Homodimer. Requires [4Fe-4S] cluster as cofactor. It depends on [2Fe-2S] cluster as a cofactor.

It catalyses the reaction (4R,5S)-dethiobiotin + (sulfur carrier)-SH + 2 reduced [2Fe-2S]-[ferredoxin] + 2 S-adenosyl-L-methionine = (sulfur carrier)-H + biotin + 2 5'-deoxyadenosine + 2 L-methionine + 2 oxidized [2Fe-2S]-[ferredoxin]. It participates in cofactor biosynthesis; biotin biosynthesis; biotin from 7,8-diaminononanoate: step 2/2. In terms of biological role, catalyzes the conversion of dethiobiotin (DTB) to biotin by the insertion of a sulfur atom into dethiobiotin via a radical-based mechanism. This Heliobacterium modesticaldum (strain ATCC 51547 / Ice1) protein is Biotin synthase.